The primary structure comprises 440 residues: N-succinylarginine dihydrolase (440 aa).

Residues 17–26 (GGLSPGNLAS), N108, and 135–136 (HR) contribute to the substrate site. Residues 17-37 (GGLSPGNLASQSHVGEPSHPR) form a disordered region. The active site involves E172. R210 is a substrate binding site. The active site involves H246. Substrate-binding residues include D248 and N358. C364 serves as the catalytic Nucleophile.

Belongs to the succinylarginine dihydrolase family. As to quaternary structure, homodimer.

It carries out the reaction N(2)-succinyl-L-arginine + 2 H2O + 2 H(+) = N(2)-succinyl-L-ornithine + 2 NH4(+) + CO2. It functions in the pathway amino-acid degradation; L-arginine degradation via AST pathway; L-glutamate and succinate from L-arginine: step 2/5. Functionally, catalyzes the hydrolysis of N(2)-succinylarginine into N(2)-succinylornithine, ammonia and CO(2). This is N-succinylarginine dihydrolase from Myxococcus xanthus (strain DK1622).